Reading from the N-terminus, the 293-residue chain is Cell adhesion molecule CEACAM21 (293 aa).

The first 34 residues, 1-34, serve as a signal peptide directing secretion; the sequence is MGPPSACPHRECIPWQGLLLTASLLTFWNAPTTA. At 35–240 the chain is on the extracellular side; it reads WLFIASAPFE…TVKSDDNTLG (206 aa). N-linked (GlcNAc...) asparagine glycosylation occurs at asparagine 111. One can recognise an Ig-like C2-type domain in the interval 147-231; that stretch reads PSIQASSTTV…SNRSDPLKLT (85 aa). Cysteine 166 and cysteine 214 are oxidised to a cystine. Residues 241–261 traverse the membrane as a helical segment; it reads ILIGVLVGSLLVAALVCFLLL. The Cytoplasmic segment spans residues 262 to 293; the sequence is RKTGRASDQSDFREQQPPASTPGHGPSDSSIS. Residues 267 to 293 form a disordered region; sequence ASDQSDFREQQPPASTPGHGPSDSSIS.

This sequence belongs to the immunoglobulin superfamily. CEA family.

The protein resides in the membrane. The polypeptide is Cell adhesion molecule CEACAM21 (Homo sapiens (Human)).